The sequence spans 195 residues: Calcineurin B homologous protein 1 (195 aa).

The N-myristoyl glycine moiety is linked to residue Gly2. Positions 2-6 match the Necessary for association with microtubule and interaction with GAPDH motif; it reads GSRAS. EF-hand domains follow at residues 26-61, 66-101, 110-145, and 151-186; these read SQIT…AINP, IINA…KSKD, SRSN…MVGV, and QLGS…VDVE. Asp123, Asp125, Asp127, Lys129, and Glu134 together coordinate Ca(2+). The Nuclear export signal 1 motif lies at 138 to 147; it reads VLRMMVGVNI. Residues 143-185 form a necessary for nuclear export signal region; sequence VGVNISDEQLGSIADRTIQEADQDGDSAISFTEFVKVLEKVDV. Asp164, Asp166, Asp168, and Glu175 together coordinate Ca(2+). A Nuclear export signal 2 motif is present at residues 176 to 185; it reads FVKVLEKVDV.

The protein belongs to the calcineurin regulatory subunit family. CHP subfamily. In terms of assembly, monomer. Interacts with STK17B; the interaction occurs in a calcium-independent manner and induces the translocation of CHP1 from the Golgi to the nucleus. Interacts with GAPDH; the interaction is direct, occurs in a N-myristoylation-dependent manner and facilitates the ability of CHP1 to bind microtubules. Interacts with KIF1B (via the C-terminal end of the kinesin-motor domain); the interaction occurs in a calcium-dependent manner. Associates (via C-terminal domain) with microtubules; the association occurs with polymerized microtubules during the cell cycle in a myristoylation- and calcium-independent manner and is enhanced by GAPDH. Interacts with PPP3CA. Interacts with SLC9A1/NHE1 (via the C-terminal domain); the interaction occurs at the plasma membrane in a calcium-dependent manner and at a domain that is critical for growth factor stimulation of the exchanger. Interacts with SLC9A3; increases SLC9A3 trafficking and activity at the plasma membrane. Phosphorylated; decreased phosphorylation is associated with an increase in SLC9A1/NHE1 Na(+)/H(+) exchange activity. Phosphorylation occurs in serum-dependent manner. The phosphorylation state may regulate the binding to SLC9A1/NHE1. In terms of processing, both N-myristoylation and calcium-mediated conformational changes are essential for its function in exocytic traffic. N-myristoylation is required for its association with microtubules and interaction with GAPDH, but not for the constitutive association to membranes. As to expression, ubiquitously expressed. Has been found in fetal eye, lung, liver, muscle, heart, kidney, thymus and spleen.

It is found in the nucleus. It localises to the cytoplasm. The protein localises to the cytoskeleton. The protein resides in the endomembrane system. Its subcellular location is the endoplasmic reticulum-Golgi intermediate compartment. It is found in the endoplasmic reticulum. It localises to the cell membrane. The protein localises to the membrane. Calcium-binding protein involved in different processes such as regulation of vesicular trafficking, plasma membrane Na(+)/H(+) exchanger and gene transcription. Involved in the constitutive exocytic membrane traffic. Mediates the association between microtubules and membrane-bound organelles of the endoplasmic reticulum and Golgi apparatus and is also required for the targeting and fusion of transcytotic vesicles (TCV) with the plasma membrane. Functions as an integral cofactor in cell pH regulation by controlling plasma membrane-type Na(+)/H(+) exchange activity. Affects the pH sensitivity of SLC9A1/NHE1 by increasing its sensitivity at acidic pH. Required for the stabilization and localization of SLC9A1/NHE1 at the plasma membrane. Inhibits serum- and GTPase-stimulated Na(+)/H(+) exchange. Plays a role as an inhibitor of ribosomal RNA transcription by repressing the nucleolar UBF1 transcriptional activity. May sequester UBF1 in the nucleoplasm and limit its translocation to the nucleolus. Associates to the ribosomal gene promoter. Acts as a negative regulator of the calcineurin/NFAT signaling pathway. Inhibits NFAT nuclear translocation and transcriptional activity by suppressing the calcium-dependent calcineurin phosphatase activity. Also negatively regulates the kinase activity of the apoptosis-induced kinase STK17B. Inhibits both STK17B auto- and substrate-phosphorylations in a calcium-dependent manner. In Homo sapiens (Human), this protein is Calcineurin B homologous protein 1 (CHP1).